We begin with the raw amino-acid sequence, 821 residues long: Epidermal growth factor receptor kinase substrate 8 (821 aa).

Composition is skewed to polar residues over residues 1–10 (MNGHMSNRSS) and 17–28 (SQLNGYGSSPPY). A disordered region spans residues 1–39 (MNGHMSNRSSGYGVYPSQLNGYGSSPPYSQMDREHSSRT). Serine 58 carries the post-translational modification Phosphoserine. A PTB domain is found at 64–194 (QYRVEHLTTF…SDSKGGKQKR (131 aa)). 3 disordered regions span residues 204-224 (KADP…PGTV), 295-320 (SELS…TLRA), and 461-525 (ANAE…RNYD). Residues 208–221 (GIPPPPRAPAPVPP) show a composition bias toward pro residues. Residue threonine 223 is modified to Phosphothreonine. Basic residues predominate over residues 299–309 (KRKKSKKSKRK). A Phosphothreonine modification is found at threonine 317. The span at 464–476 (EHQRKQDSKRLST) shows a compositional bias: basic and acidic residues. Position 475 is a phosphoserine (serine 475). One can recognise an SH3 domain in the interval 530 to 589 (QPKKYAKSKYDFVARNSSELSVMKDDVLEILDDRRQWWKVRNASGDSGFVPNNILDIMRT). The interval 610-683 (TEYGLRSADT…YKQLPVDRRK (74 aa)) is disordered. A compositionally biased stretch (pro residues) spans 622–641 (APSPPPTPAPVPVPLPPSVP). The residue at position 624 (serine 624) is a Phosphoserine; by MAPK. Threonine 628 is subject to Phosphothreonine; by MAPK. The segment covering 642–651 (APVSVPKVPA) has biased composition (low complexity). The segment at 648–821 (KVPANVTRQN…VESFDEGSSH (174 aa)) is effector region. Residues serine 658 and serine 661 each carry the phosphoserine modification. Over residues 670–683 (DSQRYKQLPVDRRK) the composition is skewed to basic and acidic residues. The segment at 679 to 697 (VDRRKSQMEEVQDELFQRL) is amphipathic helix. Residue serine 684 is modified to Phosphoserine. Helix bundle regions lie at residues 717-737 (VINI…QSKG), 751-756 (GAQLFS), 761-766 (ELRSVC), and 765-784 (VCPE…AALE). The segment at 800–821 (QEKISAAASDSGVESFDEGSSH) is disordered. Phosphoserine is present on residues serine 810 and serine 814.

This sequence belongs to the EPS8 family. Homodimer. Part of a complex consisting of ABI1, EPS8 and SOS1. Interacts with BAIAP2. Interacts with SHB and LANCL1. Interacts with EGFR; mediates EPS8 phosphorylation. Interacts with MYO15A and WHRN. In terms of processing, ubiquitinated by the SCF(FBXW5) E3 ubiquitin-protein ligase complex during G2 phase, leading to its transient degradation and subsequent cell shape changes required to allow mitotic progression. Reappears at the midzone of dividing cells. Phosphorylation at Ser-624 and Thr-628 by MAPK following BDNF treatment promotes removal from actin and filopodia formation. Phosphorylated by several receptor tyrosine kinases. As to expression, expressed in neuronal cell body and neurites, and prominently enriched in the axonal growth cone. Expressed at the tips of cochlear hair cells stereocilia.

The protein localises to the cytoplasm. The protein resides in the cell cortex. Its subcellular location is the cell projection. It is found in the ruffle membrane. It localises to the growth cone. The protein localises to the stereocilium. The protein resides in the synapse. Its subcellular location is the synaptosome. Signaling adapter that controls various cellular protrusions by regulating actin cytoskeleton dynamics and architecture. Depending on its association with other signal transducers, can regulate different processes. Together with SOS1 and ABI1, forms a trimeric complex that participates in transduction of signals from Ras to Rac by activating the Rac-specific guanine nucleotide exchange factor (GEF) activity. Acts as a direct regulator of actin dynamics by binding actin filaments and has both barbed-end actin filament capping and actin bundling activities depending on the context. Displays barbed-end actin capping activity when associated with ABI1, thereby regulating actin-based motility process: capping activity is auto-inhibited and inhibition is relieved upon ABI1 interaction. Also shows actin bundling activity when associated with BAIAP2, enhancing BAIAP2-dependent membrane extensions and promoting filopodial protrusions. Involved in the regulation of processes such as axonal filopodia growth, stereocilia length, dendritic cell migration and cancer cell migration and invasion. Acts as a regulator of axonal filopodia formation in neurons: in the absence of neurotrophic factors, negatively regulates axonal filopodia formation via actin-capping activity. In contrast, it is phosphorylated in the presence of BDNF leading to inhibition of its actin-capping activity and stimulation of filopodia formation. Component of a complex with WHRN and MYO15A that localizes at stereocilia tips and is required for elongation of the stereocilia actin core. Indirectly involved in cell cycle progression; its degradation following ubiquitination being required during G2 phase to promote cell shape changes. In Mus musculus (Mouse), this protein is Epidermal growth factor receptor kinase substrate 8 (Eps8).